The following is a 319-amino-acid chain: Acetyl-coenzyme A carboxylase carboxyl transferase subunit alpha (319 aa).

The CoA carboxyltransferase C-terminal domain maps to 38–292 (ALDKKAADLL…GKAIASMLAG (255 aa)).

It belongs to the AccA family. As to quaternary structure, acetyl-CoA carboxylase is a heterohexamer composed of biotin carboxyl carrier protein (AccB), biotin carboxylase (AccC) and two subunits each of ACCase subunit alpha (AccA) and ACCase subunit beta (AccD).

The protein resides in the cytoplasm. It catalyses the reaction N(6)-carboxybiotinyl-L-lysyl-[protein] + acetyl-CoA = N(6)-biotinyl-L-lysyl-[protein] + malonyl-CoA. It functions in the pathway lipid metabolism; malonyl-CoA biosynthesis; malonyl-CoA from acetyl-CoA: step 1/1. Its function is as follows. Component of the acetyl coenzyme A carboxylase (ACC) complex. First, biotin carboxylase catalyzes the carboxylation of biotin on its carrier protein (BCCP) and then the CO(2) group is transferred by the carboxyltransferase to acetyl-CoA to form malonyl-CoA. The polypeptide is Acetyl-coenzyme A carboxylase carboxyl transferase subunit alpha (Jannaschia sp. (strain CCS1)).